Here is a 212-residue protein sequence, read N- to C-terminus: Methylthioribulose-1-phosphate dehydratase (212 aa).

Zn(2+) is bound by residues H97 and H99.

This sequence belongs to the aldolase class II family. MtnB subfamily. In terms of assembly, homotetramer. Zn(2+) is required as a cofactor.

It carries out the reaction 5-(methylsulfanyl)-D-ribulose 1-phosphate = 5-methylsulfanyl-2,3-dioxopentyl phosphate + H2O. It functions in the pathway amino-acid biosynthesis; L-methionine biosynthesis via salvage pathway; L-methionine from S-methyl-5-thio-alpha-D-ribose 1-phosphate: step 2/6. In terms of biological role, catalyzes the dehydration of methylthioribulose-1-phosphate (MTRu-1-P) into 2,3-diketo-5-methylthiopentyl-1-phosphate (DK-MTP-1-P). The chain is Methylthioribulose-1-phosphate dehydratase from Bacillus cereus (strain ZK / E33L).